A 626-amino-acid chain; its full sequence is DNA mismatch repair protein MutL (626 aa).

The protein belongs to the DNA mismatch repair MutL/HexB family.

This protein is involved in the repair of mismatches in DNA. It is required for dam-dependent methyl-directed DNA mismatch repair. May act as a 'molecular matchmaker', a protein that promotes the formation of a stable complex between two or more DNA-binding proteins in an ATP-dependent manner without itself being part of a final effector complex. In Pelodictyon phaeoclathratiforme (strain DSM 5477 / BU-1), this protein is DNA mismatch repair protein MutL.